Reading from the N-terminus, the 277-residue chain is 3-methyl-2-oxobutanoate hydroxymethyltransferase (277 aa).

2 residues coordinate Mg(2+): Asp43 and Asp82. Residues 43–44, Asp82, and Lys112 each bind 3-methyl-2-oxobutanoate; that span reads DS. Glu114 is a Mg(2+) binding site. Glu181 acts as the Proton acceptor in catalysis.

This sequence belongs to the PanB family. As to quaternary structure, homodecamer; pentamer of dimers. Mg(2+) serves as cofactor.

The protein resides in the cytoplasm. It catalyses the reaction 3-methyl-2-oxobutanoate + (6R)-5,10-methylene-5,6,7,8-tetrahydrofolate + H2O = 2-dehydropantoate + (6S)-5,6,7,8-tetrahydrofolate. It participates in cofactor biosynthesis; (R)-pantothenate biosynthesis; (R)-pantoate from 3-methyl-2-oxobutanoate: step 1/2. Catalyzes the reversible reaction in which hydroxymethyl group from 5,10-methylenetetrahydrofolate is transferred onto alpha-ketoisovalerate to form ketopantoate. This is 3-methyl-2-oxobutanoate hydroxymethyltransferase from Listeria monocytogenes serotype 4b (strain CLIP80459).